We begin with the raw amino-acid sequence, 448 residues long: MHFIAISINHRTADVALREQVTFRDDALRIAHEDLYETKSILENVILSTCNRTEVYAVVDQIHTGRYYIQRFLARAFGFEVDDIKAMSEVKVGDEAVEHLLRVTSGLDSIVLGETQILGQIRDAFFLAQSTGTTGTIFNHLFKQAITFAKRAHNETDIADNAVSVSYAAVELAKKVFGKLKSKQAIIIGAGEMSELSLLNLLGSGITDITVVNRTIENAMKLAAKHQVKYDELSSLPNLLESADIVISSTSAQSYIITNEMIERIAENRKQDSLVLIDIAVPRDIEPGISAITNIFNYDVDDLKGLVDANLRERQLAAATISEQIPTEIHAHNEWISMLGVVPVIRALREKAMAIQAETMDSIDRKLPGLSERERKIISKHTKSIINQMLKDPIKQAKELSSDKKSNEKLELFQNIFDIEAECPHEQAKQQKESKVKEISARRIFSFE.

Residues 49-52, S109, 114-116, and Q120 contribute to the substrate site; these read TCNR and ETQ. Residue C50 is the Nucleophile of the active site. Position 189–194 (189–194) interacts with NADP(+); the sequence is GAGEMS.

The protein belongs to the glutamyl-tRNA reductase family. As to quaternary structure, homodimer.

The enzyme catalyses (S)-4-amino-5-oxopentanoate + tRNA(Glu) + NADP(+) = L-glutamyl-tRNA(Glu) + NADPH + H(+). It participates in porphyrin-containing compound metabolism; protoporphyrin-IX biosynthesis; 5-aminolevulinate from L-glutamyl-tRNA(Glu): step 1/2. In terms of biological role, catalyzes the NADPH-dependent reduction of glutamyl-tRNA(Glu) to glutamate 1-semialdehyde (GSA). This is Glutamyl-tRNA reductase from Staphylococcus aureus (strain NCTC 8325 / PS 47).